Reading from the N-terminus, the 357-residue chain is GTPase Obg (357 aa).

In terms of domain architecture, Obg spans 1 to 159 (MKFVDEAEIQ…RTLKLELKLL (159 aa)). In terms of domain architecture, OBG-type G spans 160–343 (ADIGMLGFPN…IMKSAMTLFE (184 aa)). Residues 166–173 (GFPNVGKS), 191–195 (FTTLY), 213–216 (DVPG), 293–296 (NKAD), and 324–326 (SAV) each bind GTP. Mg(2+) contacts are provided by serine 173 and threonine 193.

Belongs to the TRAFAC class OBG-HflX-like GTPase superfamily. OBG GTPase family. In terms of assembly, monomer. Requires Mg(2+) as cofactor.

It is found in the cytoplasm. Functionally, an essential GTPase which binds GTP, GDP and possibly (p)ppGpp with moderate affinity, with high nucleotide exchange rates and a fairly low GTP hydrolysis rate. Plays a role in control of the cell cycle, stress response, ribosome biogenesis and in those bacteria that undergo differentiation, in morphogenesis control. The polypeptide is GTPase Obg (Xylella fastidiosa (strain 9a5c)).